The sequence spans 336 residues: Anthranilate phosphoribosyltransferase (336 aa).

5-phospho-alpha-D-ribose 1-diphosphate is bound by residues Gly-79, 82-83 (GD), Thr-87, 89-92 (NISS), 107-115 (KHGNRSVSS), and Ser-119. Position 79 (Gly-79) interacts with anthranilate. Ser-91 contacts Mg(2+). Residue Asn-110 coordinates anthranilate. An anthranilate-binding site is contributed by Arg-165. 2 residues coordinate Mg(2+): Asp-223 and Glu-224.

This sequence belongs to the anthranilate phosphoribosyltransferase family. As to quaternary structure, homodimer. It depends on Mg(2+) as a cofactor.

It carries out the reaction N-(5-phospho-beta-D-ribosyl)anthranilate + diphosphate = 5-phospho-alpha-D-ribose 1-diphosphate + anthranilate. It functions in the pathway amino-acid biosynthesis; L-tryptophan biosynthesis; L-tryptophan from chorismate: step 2/5. Its function is as follows. Catalyzes the transfer of the phosphoribosyl group of 5-phosphorylribose-1-pyrophosphate (PRPP) to anthranilate to yield N-(5'-phosphoribosyl)-anthranilate (PRA). This is Anthranilate phosphoribosyltransferase from Tolumonas auensis (strain DSM 9187 / NBRC 110442 / TA 4).